The sequence spans 385 residues: 8-amino-7-oxononanoate synthase (385 aa).

Arginine 21 contacts substrate. 108–109 (GF) contacts pyridoxal 5'-phosphate. Histidine 133 lines the substrate pocket. Residues serine 179, histidine 207, and threonine 233 each contribute to the pyridoxal 5'-phosphate site. Lysine 236 carries the post-translational modification N6-(pyridoxal phosphate)lysine. Substrate is bound at residue threonine 352.

It belongs to the class-II pyridoxal-phosphate-dependent aminotransferase family. BioF subfamily. In terms of assembly, homodimer. Pyridoxal 5'-phosphate serves as cofactor.

The enzyme catalyses 6-carboxyhexanoyl-[ACP] + L-alanine + H(+) = (8S)-8-amino-7-oxononanoate + holo-[ACP] + CO2. It functions in the pathway cofactor biosynthesis; biotin biosynthesis. Its function is as follows. Catalyzes the decarboxylative condensation of pimeloyl-[acyl-carrier protein] and L-alanine to produce 8-amino-7-oxononanoate (AON), [acyl-carrier protein], and carbon dioxide. The polypeptide is 8-amino-7-oxononanoate synthase (Salmonella dublin (strain CT_02021853)).